The chain runs to 286 residues: tRNA (guanine-N(7)-)-methyltransferase (286 aa).

Residues 1–21 (MTNPESTAIDPVAAMGTDHTE) form a disordered region. 4 residues coordinate S-adenosyl-L-methionine: glutamate 91, glutamate 116, asparagine 143, and aspartate 165. Aspartate 165 is an active-site residue. Substrate contacts are provided by residues lysine 169, aspartate 201, and 262 to 265 (TNFE).

Belongs to the class I-like SAM-binding methyltransferase superfamily. TrmB family.

The catalysed reaction is guanosine(46) in tRNA + S-adenosyl-L-methionine = N(7)-methylguanosine(46) in tRNA + S-adenosyl-L-homocysteine. The protein operates within tRNA modification; N(7)-methylguanine-tRNA biosynthesis. Its function is as follows. Catalyzes the formation of N(7)-methylguanine at position 46 (m7G46) in tRNA. In Bifidobacterium longum (strain NCC 2705), this protein is tRNA (guanine-N(7)-)-methyltransferase.